We begin with the raw amino-acid sequence, 125 residues long: Barwin (125 aa).

At Gln1 the chain carries Pyrrolidone carboxylic acid. Residues Gln1–Asp125 enclose the Barwin domain. 3 cysteine pairs are disulfide-bonded: Cys31–Cys63, Cys52–Cys86, and Cys66–Cys123.

Functionally, may be involved in a defense mechanism. Probable plant lectin. Binds weakly a chitin analog. This is Barwin from Hordeum vulgare (Barley).